The primary structure comprises 633 residues: Chitinase 2 (633 aa).

The GH18 domain occupies 151-602; that stretch reads PKLSAYITDW…NAAREGLGYV (452 aa). Chitin contacts are provided by residues 275-276 and 306-309; these read QN and GGWS. The active-site Proton donor is the Glu349. Residues Tyr350, 422–425, and Trp582 contribute to the chitin site; that span reads MSYD.

Belongs to the glycosyl hydrolase 18 family. In terms of assembly, semipurified toxin complex consists of at least YenA1-YenA2-YenB-YenC1-YenC2-Chi1-Chi2. The Yen-TC:K9 subcomplex is about 26 nm tall and 22 nm in diameter with 5-fold symmetry and 5 copies of YenA1, YenA2, Chi1 and Chi2; the chitinase subunits may be solvent accessible on the exterior the complex. The Yen-TC:K9 subcomplex has no insecticidal activity. The native complex with additional YenB, YenC1 and YenC2 subunits is 16 nm taller and is insecticidal; the toxicity-conferring subunits are present at about 1 copy each.

It is found in the secreted. The catalysed reaction is Random endo-hydrolysis of N-acetyl-beta-D-glucosaminide (1-&gt;4)-beta-linkages in chitin and chitodextrins.. Toxin complex is secreted when grown at 25 degrees Celsius or less; at higher temperatures the proteins are present intracellularly but not secreted. Functionally, part of an orally active toxin complex (TC) with strong insecticidal effects on larvae of the Coleoptera Costelytra zealandica, Acrossidius tasmania and Adoryphorus couloni and some Lepidoptera larvae. The TC has an endochitinase activity. This subunit might aid infection by degradation of the larval peritrophic membrane. This is Chitinase 2 from Yersinia entomophaga.